Consider the following 94-residue polypeptide: Exodeoxyribonuclease 7 small subunit (94 aa).

This sequence belongs to the XseB family. As to quaternary structure, heterooligomer composed of large and small subunits.

It localises to the cytoplasm. The enzyme catalyses Exonucleolytic cleavage in either 5'- to 3'- or 3'- to 5'-direction to yield nucleoside 5'-phosphates.. In terms of biological role, bidirectionally degrades single-stranded DNA into large acid-insoluble oligonucleotides, which are then degraded further into small acid-soluble oligonucleotides. The sequence is that of Exodeoxyribonuclease 7 small subunit from Ralstonia nicotianae (strain ATCC BAA-1114 / GMI1000) (Ralstonia solanacearum).